Consider the following 21-residue polypeptide: Thanatin (21 aa).

Cysteines 11 and 18 form a disulfide.

It is found in the secreted. In terms of biological role, insect defense peptide with a broad spectrum of activity against Gram-positive and Gram-negative bacteria and fungi. No activity against S.aureus. Stops respiration in bacteria but does not permeabilize their inner membranes. The polypeptide is Thanatin (Podisus maculiventris (Spined soldier bug)).